The sequence spans 137 residues: MVGVRLVFTNAFVVTVLLTLLLDVVVKPAEGQSSCSLSSRPHPRGICGSNLAGFRAFICSNQNSPSMVKRDAETGWLLPETMVKRNAETDLDDPLRNIKLSSESALTYLTKRQRTTNLVCECCFNYCTPDVVRKYCY.

The first 31 residues, 1-31 (MVGVRLVFTNAFVVTVLLTLLLDVVVKPAEG), serve as a signal peptide directing secretion. Residue Gln32 is modified to Pyrrolidone carboxylic acid. Cystine bridges form between Cys47/Cys123, Cys59/Cys136, and Cys122/Cys127. Positions 71–83 (DAETGWLLPETMV) are cleaved as a propeptide — C-beta peptide like. Residues 86-110 (NAETDLDDPLRNIKLSSESALTYLT) constitute a propeptide, C-alpha peptide like. Gln113 is subject to Pyrrolidone carboxylic acid.

Belongs to the insulin family. Heterodimer of a B chain and an A chain linked by two disulfide bonds. As to expression, expressed in the cerebral light-green cells which are giant neuroendocrines cells involved in the control of growth.

The protein resides in the cytoplasmic vesicle. Its subcellular location is the secretory vesicle. This is Molluscan insulin-related peptide 2 from Lymnaea stagnalis (Great pond snail).